The following is a 284-amino-acid chain: Nucleotide-binding protein NGK_0463 (284 aa).

8-15 contacts ATP; the sequence is GLSGSGKS. GTP is bound at residue 58-61; it reads DVRS.

It belongs to the RapZ-like family.

In terms of biological role, displays ATPase and GTPase activities. The sequence is that of Nucleotide-binding protein NGK_0463 from Neisseria gonorrhoeae (strain NCCP11945).